The following is a 296-amino-acid chain: Sulfotransferase 1B1 (296 aa).

48–53 contacts 3'-phosphoadenylyl sulfate; the sequence is KSGTTW. Residue 107–109 coordinates substrate; sequence KTH. His109 (proton acceptor) is an active-site residue. Residues Arg131, Ser139, Tyr194, 228–233, and 258–260 contribute to the 3'-phosphoadenylyl sulfate site; these read TSFEMM and RKG.

Belongs to the sulfotransferase 1 family. Expressed highly in the colon, kidney and small intestine of male and female dogs. Highly expressed in the jejunum and ileum of the male dog than the female dog, which displayed more expression in duodenum (at protein level).

It is found in the cytoplasm. It catalyses the reaction a phenol + 3'-phosphoadenylyl sulfate = an aryl sulfate + adenosine 3',5'-bisphosphate + H(+). The enzyme catalyses 3,3',5-triiodo-L-thyronine + 3'-phosphoadenylyl sulfate = 3,3',5-triiodo-L-thyronine sulfate + adenosine 3',5'-bisphosphate + H(+). It carries out the reaction 3,3',5'-triiodo-L-thyronine + 3'-phosphoadenylyl sulfate = 3,3',5'-triiodo-L-thyronine sulfate + adenosine 3',5'-bisphosphate + H(+). The catalysed reaction is 3,3'-diiodo-L-thyronine + 3'-phosphoadenylyl sulfate = 3,3'-diiodo-L-thyronine sulfate + adenosine 3',5'-bisphosphate + H(+). It catalyses the reaction 4-ethylphenol + 3'-phosphoadenylyl sulfate = 4-ethylphenyl sulfate + adenosine 3',5'-bisphosphate + H(+). Sulfotransferase that utilizes 3'-phospho-5'-adenylyl sulfate (PAPS) as sulfonate donor to catalyze the sulfate conjugation of dopamine, small phenols such as 1-naphthol and p-nitrophenol and thyroid hormones, including 3,3'-diiodothyronine, triidothyronine (T3) and reverse triiodothyronine (rT3). May play a role in gut microbiota-host metabolic interaction. O-sulfonates 4-ethylphenol (4-EP), a dietary tyrosine-derived metabolite produced by gut bacteria. The product 4-EPS crosses the blood-brain barrier and may negatively regulate oligodendrocyte maturation and myelination, affecting the functional connectivity of different brain regions associated with the limbic system. The chain is Sulfotransferase 1B1 (SULT1B1) from Canis lupus familiaris (Dog).